The following is a 155-amino-acid chain: Transcriptional repressor NrdR (155 aa).

The span at 1-11 (MECPNCHQNAS) shows a compositional bias: polar residues. Residues 1 to 22 (MECPNCHQNASRVIDSRPSDEN) are disordered. The segment at 3–34 (CPNCHQNASRVIDSRPSDENRAIRRRRECENC) is a zinc-finger region. One can recognise an ATP-cone domain in the interval 49–139 (LLVVKNDGTR…IYREFKDMSS (91 aa)).

Belongs to the NrdR family. It depends on Zn(2+) as a cofactor.

Its function is as follows. Negatively regulates transcription of bacterial ribonucleotide reductase nrd genes and operons by binding to NrdR-boxes. This Lactobacillus acidophilus (strain ATCC 700396 / NCK56 / N2 / NCFM) protein is Transcriptional repressor NrdR.